A 30-amino-acid polypeptide reads, in one-letter code: Bacteriocin plantaricin KL-1Y (30 aa).

The protein resides in the secreted. Functionally, bacteriocin with activity against species of Lactobacillus, Lactococcus, Pediococcus, Leuconostoc and against B.subtilis and, to a lesser extent, against B.coagulans, B.cereus and species of Enterococcus, Listeria, Kocuria, Staphylococcus, Corynebacterium, Salmonella, Pseudomonas and Escherichia. This is Bacteriocin plantaricin KL-1Y from Lactiplantibacillus plantarum (Lactobacillus plantarum).